We begin with the raw amino-acid sequence, 239 residues long: Glutathione S-transferase verG (239 aa).

Positions 18–101 (KPLIFVMEGR…YLSNKYDAKR (84 aa)) constitute a GST N-terminal domain. Residues 107 to 237 (NAAENLEICN…ELDSRKEIAI (131 aa)) form the GST C-terminal domain.

Belongs to the GST superfamily.

It carries out the reaction RX + glutathione = an S-substituted glutathione + a halide anion + H(+). The protein operates within mycotoxin biosynthesis. Its function is as follows. Glutathione S-transferase; part of the gene cluster that mediates the biosynthesis of 11'-deoxyverticillin A, one of the dimeric epipolythiodioxopiperazines (ETPs) from the verticillin family that act as mycotoxins. 11'-deoxyverticillin A is required for normal conidiation. The nonribosomal peptide synthetase verP is speculated to be responsible for condensation of amino acids to form the carbon skeleton of verticillin, whereas the cluster-specific tailoring enzymes are involved in further modifications leading to the production of 11'-deoxyverticillin A. The protein is Glutathione S-transferase verG of Clonostachys rogersoniana.